The primary structure comprises 44 residues: MRDLKTYLSVAPVLSTLWFGALAGLLIEINRFFPDALTFPFFSF.

Residues 7 to 27 (YLSVAPVLSTLWFGALAGLLI) form a helical membrane-spanning segment.

This sequence belongs to the PsaJ family.

The protein resides in the plastid. Its subcellular location is the chloroplast thylakoid membrane. In terms of biological role, may help in the organization of the PsaE and PsaF subunits. The chain is Photosystem I reaction center subunit IX from Solanum bulbocastanum (Wild potato).